Here is a 115-residue protein sequence, read N- to C-terminus: Large ribosomal subunit protein uL22 (115 aa).

The protein belongs to the universal ribosomal protein uL22 family. As to quaternary structure, part of the 50S ribosomal subunit.

Its function is as follows. This protein binds specifically to 23S rRNA; its binding is stimulated by other ribosomal proteins, e.g. L4, L17, and L20. It is important during the early stages of 50S assembly. It makes multiple contacts with different domains of the 23S rRNA in the assembled 50S subunit and ribosome. Functionally, the globular domain of the protein is located near the polypeptide exit tunnel on the outside of the subunit, while an extended beta-hairpin is found that lines the wall of the exit tunnel in the center of the 70S ribosome. The chain is Large ribosomal subunit protein uL22 from Endomicrobium trichonymphae.